The sequence spans 238 residues: uncharacterized protein (238 aa).

Positions 1–28 (MSRNSRGSGRYVFVVLACVFGYTRAVHA) are cleaved as a signal peptide.

This is an uncharacterized protein from Treponema pallidum (strain Nichols).